The following is a 675-amino-acid chain: Secretogranin-1 (675 aa).

Residues 1–20 (MQRAMLLGLLGAAALAAVIS) form the signal peptide. A disulfide bridge links C36 with C57. The segment covering 64 to 90 (SGKEVKGEEKGENENSKFEVRLLRDPS) has biased composition (basic and acidic residues). Disordered regions lie at residues 64 to 507 (SGKE…YPTT) and 528 to 555 (NSDFEKKGNPDDSFLDDDGEDGNGVTMT). Phosphoserine occurs at positions 93, 99, 100, 129, and 147. The O-linked (Xyl...) (chondroitin sulfate) serine glycan is linked to S93. Basic and acidic residues-rich tracts occupy residues 148–161 (KEAKIRHSEERGGK) and 168–248 (GKIY…KPQE). S190 bears the Phosphoserine mark. S236 is a glycosylation site (O-linked (Xyl...) (chondroitin sulfate) serine). The span at 250–269 (PDQDQSEEESEEGEEGEEGA) shows a compositional bias: acidic residues. S255, S259, S291, S309, and S333 each carry phosphoserine. The span at 292–311 (YEGRRPLSEERKHAAGESKD) shows a compositional bias: basic and acidic residues. Y339 bears the Sulfotyrosine mark. Composition is skewed to basic and acidic residues over residues 361–410 (GSEE…EGAK) and 429–452 (SRQEKRLLDEGHDPVHESPVDTAK). Phosphoserine occurs at positions 362, 372, 375, and 397. Y469 bears the Sulfotyrosine mark. A phosphoserine mark is found at S490, S529, and S540. Residue Y563 is modified to Sulfotyrosine. The segment at 620-646 (DFYDSEEQMGPHQEAEDEKDRADQRVL) is disordered. Y622 is modified (sulfotyrosine; partial). S624 carries the phosphoserine modification. A compositionally biased stretch (basic and acidic residues) spans 637 to 646 (EKDRADQRVL). Arginine amide; in CCB peptide short form is present on R674.

Belongs to the chromogranin/secretogranin protein family. Interacts with ITPR1 in the secretory granules. In terms of processing, extensively processed in glucagonoma tissue by limited proteolysis at conserved basic residues. Alternative processing are seen in different tissues. The proglucagon-converting enzymes present in transformed alpha-cells are likely candidates to be involved in tissue-specific processing. As to expression, expressed in the brain, adrenal medulla and anterior pituitary. In the brain, localized to the hippocampal formation, the endocrine hypothalamus, the olfactory system, and in anatomically distinct structures in the pons-medulla.

It is found in the secreted. In terms of biological role, secretogranin-1 is a neuroendocrine secretory granule protein, which may be the precursor for other biologically active peptides. This is Secretogranin-1 (Chgb) from Rattus norvegicus (Rat).